Reading from the N-terminus, the 650-residue chain is Putative polypeptide N-acetylgalactosaminyltransferase 9 (650 aa).

The Cytoplasmic portion of the chain corresponds to 1-11 (MAFIWRRRSTT). The chain crosses the membrane as a helical; Signal-anchor for type II membrane protein span at residues 12–31 (IVKLVAFALAIWFCIAFLVY). Over 32 to 650 (TDDTRRRAAQ…TLENYDSSKL (619 aa)) the chain is Lumenal. The interval 84–154 (NVIGGGGQKQ…NPGELGKPVR (71 aa)) is disordered. Basic and acidic residues predominate over residues 107–136 (HKADLQAERMRKKAAEQPKKKPQEDSKKVI). 5 cysteine pairs are disulfide-bonded: Cys-198/Cys-432, Cys-423/Cys-499, Cys-535/Cys-554, Cys-577/Cys-590, and Cys-616/Cys-631. Residues 208-317 (LPKTDVIICF…EGWLEPLLDR (110 aa)) are catalytic subdomain A. 3 residues coordinate substrate: Cys-216, Asp-249, and Arg-278. Asp-301 contributes to the Mn(2+) binding site. Residues Ser-302 and His-303 each coordinate substrate. His-303 contributes to the Mn(2+) binding site. Asn-321 and Asn-373 each carry an N-linked (GlcNAc...) asparagine glycan. The catalytic subdomain B stretch occupies residues 378–440 (PVYSPTMAGG…PCSHVGHIFR (63 aa)). His-437 provides a ligand contact to Mn(2+). Substrate is bound by residues Arg-440 and Tyr-445. A Ricin B-type lectin domain is found at 521–643 (AHGEIRNLGY…SLSRQQWTLE (123 aa)).

The protein belongs to the glycosyltransferase 2 family. GalNAc-T subfamily. In terms of assembly, isoform A forms homotetramer. Isoform B forms homodimer. Mn(2+) is required as a cofactor.

The protein resides in the golgi apparatus membrane. It catalyses the reaction L-seryl-[protein] + UDP-N-acetyl-alpha-D-galactosamine = a 3-O-[N-acetyl-alpha-D-galactosaminyl]-L-seryl-[protein] + UDP + H(+). The enzyme catalyses L-threonyl-[protein] + UDP-N-acetyl-alpha-D-galactosamine = a 3-O-[N-acetyl-alpha-D-galactosaminyl]-L-threonyl-[protein] + UDP + H(+). It functions in the pathway protein modification; protein glycosylation. Catalyzes the initial reaction in O-linked oligosaccharide biosynthesis, the transfer of an N-acetyl-D-galactosamine residue to a serine or threonine residue on the protein receptor. It can both act as a peptide transferase that transfers GalNAc onto unmodified peptide substrates, and as a glycopeptide transferase that requires the prior addition of a GalNAc on a peptide before adding additional GalNAc moieties. Functionally, N-acetylgalactosaminyltransferase which preferentially O-glycosylates negatively charge substrates. O-glycosylates mucin-like protein Sgs3 in the salivary gland but to a lesser extent than isoform B. By regulating the O-glycosylation of secretory cargo proteins plays a role in the morphology and maturation of salivary gland secretory granules. Its function is as follows. N-acetylgalactosaminyltransferase which preferentially O-glycosylates positively charge substrates. O-glycosylates mucin-like protein Sgs3 in the salivary gland. By regulating the O-glycosylation of secretory cargo proteins, plays a role in the morphology and maturation of salivary gland secretory granules. The chain is Putative polypeptide N-acetylgalactosaminyltransferase 9 from Drosophila melanogaster (Fruit fly).